A 488-amino-acid chain; its full sequence is Inositol 1,3,4-trisphosphate 5/6-kinase 4 (488 aa).

Residues K208 and K224 each contribute to the 1D-myo-inositol 1,3,4-trisphosphate site. One can recognise an ATP-grasp domain in the interval 246 to 488 (NACAIVDPIR…RFDQHVQEKH (243 aa)). Residues R263 and K315 each coordinate ATP. 1D-myo-inositol 1,3,4-trisphosphate-binding residues include H326 and K360. ATP contacts are provided by residues 349–360 (QEYVDHSSRIFK), S375, and S398. Mg(2+) contacts are provided by D439, D453, and N455. Residues N455 and S459 each contribute to the 1D-myo-inositol 1,3,4-trisphosphate site.

It belongs to the ITPK1 family. Monomer. It depends on Mg(2+) as a cofactor. As to expression, expressed in roots, leaf vasculature, cauline leaves, flower buds and siliques.

The catalysed reaction is 1D-myo-inositol 1,3,4-trisphosphate + ATP = 1D-myo-inositol 1,3,4,5-tetrakisphosphate + ADP + H(+). It catalyses the reaction 1D-myo-inositol 1,3,4-trisphosphate + ATP = 1D-myo-inositol 1,3,4,6-tetrakisphosphate + ADP + H(+). In terms of biological role, kinase that can phosphorylate the inositol polyphosphate Ins(1,3,4)P3 to form InsP4. Also phosphorylates a racemic mixture of Ins(1,4,6)P3 and Ins(3,4,6)P3 to form InsP4. Does not display inositol 3,4,5,6-tetrakisphosphate 1-kinase activity, but possesses inositol 1,4,5,6-tetrakisphosphate and inositol 1,3,4,5-tetrakisphosphate isomerase activity. Ins(1,3,4,6)P4 is an essential molecule in the hexakisphosphate (InsP6) pathway. This chain is Inositol 1,3,4-trisphosphate 5/6-kinase 4 (ITPK4), found in Arabidopsis thaliana (Mouse-ear cress).